A 474-amino-acid chain; its full sequence is MSVFPESFLWGGALAANQSEGAFREGDKGLTTVDMIPHGEHRMAVKLGLEKRFQLRDDEFYPSHEATDFYHRYKEDIALMAEMGFKVFRTSIAWSRLFPQGDEITPNQQGIAFYRSVFEECKKYGIEPLVTLCHFDVPMHLVTEYGSWRNRKLVEFFSRYARTCFEAFDGLVKYWLTFNEINIMLHSPFSGAGLVFEEGENQDQVKYQAAHHQLVASALATKIAHEVNPQNQVGCMLAGGNFYPYSCKPEDVWAALEKDRENLFFIDVQARGTYPAYSARVFREKGVTINKAPGDDEILKNTVDFVSFSYYASRCASAEMNANNSSAANVVKSLRNPYLQVSDWGWGIDPLGLRITMNMMYDRYQKPLFLVENGLGAKDEFAANGEINDDYRISYLREHIRAMGEAIADGIPLMGYTTWGCIDLVSASTGEMSKRYGFVFVDRDDAGNGTLTRTRKKSFWWYKKVIASNGEDLE.

E180 acts as the Proton donor in catalysis. The Nucleophile role is filled by E372.

The protein belongs to the glycosyl hydrolase 1 family.

The catalysed reaction is 6-phospho-beta-D-glucosyl-(1-&gt;4)-D-glucose + H2O = D-glucose 6-phosphate + D-glucose. Can hydrolyze salicin, cellobiose, and probably arbutin. The sequence is that of 6-phospho-beta-glucosidase AscB (ascB) from Escherichia coli (strain K12).